We begin with the raw amino-acid sequence, 726 residues long: Transmembrane channel-like protein 8 (726 aa).

At 1-114 the chain is on the cytoplasmic side; the sequence is MLLPRSVSSE…GIRSYFTFLR (114 aa). S6 is subject to Phosphoserine. Residues 115 to 135 traverse the membrane as a helical segment; that stretch reads FLLLLNLLSLLLTASFVLLPL. Residues 136-200 are Lumenal-facing; sequence VWLRPPDPGP…VGPESSSVYS (65 aa). Residue N148 is glycosylated (N-linked (GlcNAc...) asparagine). The chain crosses the membrane as a helical span at residues 201–221; it reads IRLAYLLSPLACLLLCFCGTL. Over 222–299 the chain is Cytoplasmic; it reads RRMVKGLPQK…AQTACRLLSY (78 aa). A helical transmembrane segment spans residues 300–320; sequence LRVNVLNGLLVVGAISAIFWA. Residues 321–338 are Lumenal-facing; it reads TKYSQDNKEESLFLLLQY. A helical membrane pass occupies residues 339-359; that stretch reads LPPGVIALVNFLGPLLFTFLV. Topologically, residues 360–426 are cytoplasmic; it reads QLENYPPNTE…QCWENSVGEE (67 aa). Residues 362–530 form a TMC domain region; the sequence is ENYPPNTEVN…SSRPFRASSS (169 aa). The chain crosses the membrane as a helical span at residues 427-447; it reads LYKLSIFNFLLTVAFAFLVTL. Over 448–488 the chain is Lumenal; sequence PRRLLVDRFSGRFWAWLEREEFLVPKNVLDIVAGQTVTWMG. Residues 489-509 form a helical membrane-spanning segment; it reads LFYCPLLPLLNSVFLFLTFYI. The Cytoplasmic segment spans residues 510 to 531; the sequence is KKYTLLKNSRASSRPFRASSST. The chain crosses the membrane as a helical span at residues 532–552; sequence FFFQLVLLLGLLLAAVPLGYV. Topologically, residues 553–594 are lumenal; the sequence is VSSIHSSWDCGLFTNYSAPWQVVPELVALGLPPIGQRALHYL. N567 carries an N-linked (GlcNAc...) asparagine glycan. A helical membrane pass occupies residues 595–615; it reads GSHAFSFPLLIMLSLVLTVCV. The Cytoplasmic segment spans residues 616–726; it reads SQTQANARAI…RFRFPSGAEL (111 aa). Residues 651–726 form a disordered region; it reads PEPGPSDSPG…RFRFPSGAEL (76 aa). The span at 652 to 662 shows a compositional bias: pro residues; sequence EPGPSDSPGPK. Phosphoserine occurs at positions 658 and 673.

Belongs to the TMC family. In terms of assembly, interacts with TMC6. Interacts and forms a complex with TMC6 and CIB1; the interaction stabilizes each component of the complex. Interacts and forms a complex with TMC6 and SLC30A1/ZNT1; the interaction regulates zinc transport into the ER. Interacts with TRADD; the interaction competes with TRADD/RIPK1/TRAF2/cIAPs complex I formation and facilites complex II formation. As to quaternary structure, (Microbial infection) Interacts with human papillomavirus 16/HPV16 protein E5; the interaction alleviates TMC8-mediated transcription factors inhibition. In terms of tissue distribution, expressed in placenta, prostate and testis.

It localises to the endoplasmic reticulum membrane. It is found in the golgi apparatus membrane. The protein localises to the nucleus membrane. Acts as a regulatory protein involved in the regulation of numerous cellular processes. Together with its homolog TMC6/EVER1, forms a complex with calcium-binding protein CIB1 in lymphocytes and keratynocytes where TMC6 and TMC8 stabilize CIB1 levels and reciprocally. Together with TMC6, also forms a complex with and activates zinc transporter ZNT1 at the ER membrane of keratynocytes, thereby facilitating zinc uptake into the ER. Also inhibits receptor-mediated calcium release from ER stores and calcium activated and volume regulated chloride channels. Down-regulates the activity of transcription factors induced by zinc and cytokines. Also sequesters TRADD which impairs the recruitment of TRAF2 and RIPK1 in the pro-survival complex I and promotes proapoptotic complex II formation, and may therefore be involved in TNF-induced cell death/survival decisions. The protein is Transmembrane channel-like protein 8 of Homo sapiens (Human).